Consider the following 340-residue polypeptide: CMP-N-acetylneuraminate-beta-galactosamide-alpha-2,3-sialyltransferase 1 (340 aa).

Residues 1–13 (MVTLRKRTLKVLT) are Cytoplasmic-facing. The helical; Signal-anchor for type II membrane protein transmembrane segment at 14–34 (FLVLFIFLTSFFLNYSHTMVA) threads the bilayer. Residues 35–340 (TTWFPKQMVL…INKIRIFKGR (306 aa)) lie on the Lumenal side of the membrane. 3 cysteine pairs are disulfide-bonded: Cys-59-Cys-64, Cys-61-Cys-139, and Cys-142-Cys-281. Asn-79 carries an N-linked (GlcNAc...) asparagine glycan. Gln-105 is a substrate binding site. Asn-114 is a glycosylation site (N-linked (GlcNAc...) asparagine). Substrate-binding residues include Asn-147 and Asn-170. N-linked (GlcNAc...) asparagine glycosylation is present at Asn-201. Residues Tyr-230, Tyr-266, Gly-270, Gly-290, His-299, and His-316 each coordinate substrate. Asn-323 carries N-linked (GlcNAc...) asparagine glycosylation.

The protein belongs to the glycosyltransferase 29 family. Post-translationally, the soluble form derives from the membrane form by proteolytic processing.

It localises to the golgi apparatus. Its subcellular location is the golgi stack membrane. The protein localises to the trans-Golgi network membrane. It is found in the secreted. It catalyses the reaction a beta-D-galactosyl-(1-&gt;3)-N-acetyl-alpha-D-galactosaminyl derivative + CMP-N-acetyl-beta-neuraminate = an N-acetyl-alpha-neuraminyl-(2-&gt;3)-beta-D-galactosyl-(1-&gt;3)-N-acetyl-alpha-D-galactosaminyl derivative + CMP + H(+). The enzyme catalyses a ganglioside GM1 + CMP-N-acetyl-beta-neuraminate = a ganglioside GD1a + CMP + H(+). It carries out the reaction a ganglioside GM1 (d18:1(4E)) + CMP-N-acetyl-beta-neuraminate = a ganglioside GD1a (d18:1(4E)) + CMP + H(+). The catalysed reaction is ganglioside GM1 (d18:1(4E)/18:0) + CMP-N-acetyl-beta-neuraminate = ganglioside GD1a (18:1(4E)/18:0) + CMP + H(+). It catalyses the reaction a ganglioside GA1 + CMP-N-acetyl-beta-neuraminate = a ganglioside GM1b + CMP + H(+). The enzyme catalyses a ganglioside GA1 (d18:1(4E)) + CMP-N-acetyl-beta-neuraminate = a ganglioside GM1b (d18:1(4E)) + CMP + H(+). It carries out the reaction a ganglioside GD1b + CMP-N-acetyl-beta-neuraminate = a ganglioside GT1b + CMP + H(+). The catalysed reaction is a 3-O-[beta-D-galactosyl-(1-&gt;3)-N-acetyl-alpha-D-galactosaminyl]-L-threonyl-[protein] + CMP-N-acetyl-beta-neuraminate = a 3-O-[N-acetyl-alpha-neuraminyl-(2-&gt;3)-beta-D-galactosyl-(1-&gt;3)-N-acetyl-alpha-D-galactosaminyl]-L-threonyl-[protein] + CMP + H(+). It catalyses the reaction a 3-O-[beta-D-galactosyl-(1-&gt;3)-N-acetyl-alpha-D-galactosaminyl]-L-seryl-[protein] + CMP-N-acetyl-beta-neuraminate = 3-O-[N-acetyl-alpha-neuraminyl-(2-&gt;3)-beta-D-galactosyl-(1-&gt;3)-N-acetyl-alpha-D-galactosaminyl]-L-seryl-[protein] + CMP + H(+). Its pathway is protein modification; protein glycosylation. It participates in glycolipid biosynthesis. Its function is as follows. A beta-galactoside alpha2-&gt;3 sialyltransferase involved in terminal sialylation of glycoproteins and glycolipids. Catalyzes the transfer of sialic acid (N-acetyl-neuraminic acid; Neu5Ac) from the nucleotide sugar donor CMP-Neu5Ac onto acceptor Galbeta-(1-&gt;3)-GalNAc-terminated glycoconjugates through an alpha2-3 linkage. Adds sialic acid to the core 1 O-glycan, Galbeta-(1-&gt;3)-GalNAc-O-Ser/Thr, which is a major structure of mucin-type O-glycans. As part of a homeostatic mechanism that regulates CD8-positive T cell numbers, sialylates core 1 O-glycans of T cell glycoproteins, SPN/CD43 and PTPRC/CD45. Prevents premature apoptosis of thymic CD8-positive T cells prior to peripheral emigration, whereas in the secondary lymphoid organs controls the survival of CD8-positive memory T cells generated following a successful immune response. Transfers sialic acid to asialofetuin, presumably onto Galbeta-(1-&gt;3)-GalNAc-O-Ser. Sialylates GM1a, GA1 and GD1b gangliosides to form GD1a, GM1b and GT1b, respectively. The chain is CMP-N-acetylneuraminate-beta-galactosamide-alpha-2,3-sialyltransferase 1 (ST3GAL1) from Pan troglodytes (Chimpanzee).